A 680-amino-acid polypeptide reads, in one-letter code: Oligopeptidase A (680 aa).

A Zn(2+)-binding site is contributed by His469. Glu470 is an active-site residue. Zn(2+)-binding residues include His473 and His476.

It belongs to the peptidase M3 family. The cofactor is Zn(2+).

The enzyme catalyses Hydrolysis of oligopeptides, with broad specificity. Gly or Ala commonly occur as P1 or P1' residues, but more distant residues are also important, as is shown by the fact that Z-Gly-Pro-Gly-|-Gly-Pro-Ala is cleaved, but not Z-(Gly)(5).. Its function is as follows. May play a specific role in the degradation of signal peptides after they are released from precursor forms of secreted proteins. Can cleave N-acetyl-L-Ala(4). The protein is Oligopeptidase A (prlC) of Escherichia coli (strain K12).